The following is a 211-amino-acid chain: WAP four-disulfide core domain protein 1 (211 aa).

Positions 1 to 23 are cleaved as a signal peptide; that stretch reads MGNCGRKVLRALSFLLLLGSSSA. The region spanning 50–99 is the WAP domain; sequence RQPHADRCPPPPRTLPPGACQATRCQADSECPRHRRCCYNGCAYACLEAV. 4 disulfide bridges follow: Cys57–Cys87, Cys69–Cys91, Cys74–Cys86, and Cys80–Cys95. Over residues 182 to 198 the composition is skewed to basic and acidic residues; that stretch reads VLRQRLHKEYPEGDSKN. Positions 182–211 are disordered; sequence VLRQRLHKEYPEGDSKNVAEPGKGQQRHFP.

The protein resides in the secreted. Has growth inhibitory activity. In Mus musculus (Mouse), this protein is WAP four-disulfide core domain protein 1 (Wfdc1).